The chain runs to 173 residues: Nicotinamide-nucleotide adenylyltransferase (173 aa).

Belongs to the archaeal NMN adenylyltransferase family.

The protein resides in the cytoplasm. The enzyme catalyses beta-nicotinamide D-ribonucleotide + ATP + H(+) = diphosphate + NAD(+). It participates in cofactor biosynthesis; NAD(+) biosynthesis; NAD(+) from nicotinamide D-ribonucleotide: step 1/1. The sequence is that of Nicotinamide-nucleotide adenylyltransferase (ffdC) from Methanolobus tindarius.